A 274-amino-acid polypeptide reads, in one-letter code: Carboxy-S-adenosyl-L-methionine synthase (274 aa).

Residues Tyr59, 93 to 95, 149 to 150, Asn164, and Arg231 each bind S-adenosyl-L-methionine; these read GCS and DI.

It belongs to the class I-like SAM-binding methyltransferase superfamily. Cx-SAM synthase family. Homodimer.

The catalysed reaction is prephenate + S-adenosyl-L-methionine = carboxy-S-adenosyl-L-methionine + 3-phenylpyruvate + H2O. Its function is as follows. Catalyzes the conversion of S-adenosyl-L-methionine (SAM) to carboxy-S-adenosyl-L-methionine (Cx-SAM). This Psychrobacter sp. (strain PRwf-1) protein is Carboxy-S-adenosyl-L-methionine synthase.